An 867-amino-acid polypeptide reads, in one-letter code: Nitrate reductase [NADPH] (867 aa).

Residues 38-58 (DIPLPPPSKEPTEVLSIDKPT) are disordered. A Mo-molybdopterin-binding site is contributed by Cys-152. The Cytochrome b5 heme-binding domain maps to 514 to 589 (NRIIDLQEFK…MPDYHIGTMD (76 aa)). Residues His-549 and His-572 each contribute to the heme site. Residues 615 to 726 (KSWTKATLVK…KGPTGRFEYL (112 aa)) enclose the FAD-binding FR-type domain. FAD contacts are provided by residues 669 to 672 (RSYT), 686 to 690 (LVKIY), Phe-691, 700 to 702 (KMT), and Thr-753. NADP(+) is bound at residue 837–846 (MVLICGPEAM).

It belongs to the nitrate reductase family. Homodimer. FAD is required as a cofactor. Heme serves as cofactor. Requires Mo-molybdopterin as cofactor.

The catalysed reaction is nitrite + NADP(+) + H2O = nitrate + NADPH + H(+). Its function is as follows. Nitrate reductase is a key enzyme involved in the first step of nitrate assimilation in plants, fungi and bacteria. This chain is Nitrate reductase [NADPH] (niaD), found in Aspergillus niger.